The following is an 850-amino-acid chain: Coiled-coil and C2 domain-containing protein 1B (850 aa).

Over residues 1–10 (MPGPRPRKGP) the composition is skewed to basic residues. Disordered stretches follow at residues 1–21 (MPGP…ETAK), 54–73 (LTGE…RAPL), and 114–145 (GVDE…EQPV). Positions 114–129 (GVDEETGLVDDSEETS) are enriched in acidic residues. Residues 167–213 (LQALLEERIQNYREAAASAKEAGEAAKARRCERGLKTLESQLATVRK) adopt a coiled-coil conformation. 2 disordered regions span residues 215–277 (GKIC…SDPD) and 436–525 (FAEL…SPSV). Basic and acidic residues predominate over residues 234-244 (AHQERPSKDSE). Residues 440-450 (PVPPGFPPIPG) are compositionally biased toward pro residues. 2 stretches are compositionally biased toward low complexity: residues 489-502 (PAQA…AQPL) and 511-524 (EPKA…LSPS). The residue at position 585 (Ser585) is a Phosphoserine. Thr588 is subject to Phosphothreonine. Positions 668–807 (DPPSHHFELK…EKECEIREIM (140 aa)) constitute a C2 domain.

As to quaternary structure, interacts with CHMP4B. As to expression, expressed in epididymal sperm but not in testicular sperm (at protein level).

Its subcellular location is the nucleus. Transcription factor that binds specifically to the DRE (dual repressor element) and represses HTR1A gene transcription in neuronal cells. In Rattus norvegicus (Rat), this protein is Coiled-coil and C2 domain-containing protein 1B (Cc2d1b).